A 388-amino-acid chain; its full sequence is Chorismate synthase (388 aa).

NADP(+)-binding residues include Arg-39 and Arg-45. FMN is bound by residues 130–132 (RSS), 251–252 (NA), Gly-296, 311–315 (KPIPT), and Arg-337.

The protein belongs to the chorismate synthase family. Homotetramer. FMNH2 is required as a cofactor.

The catalysed reaction is 5-O-(1-carboxyvinyl)-3-phosphoshikimate = chorismate + phosphate. Its pathway is metabolic intermediate biosynthesis; chorismate biosynthesis; chorismate from D-erythrose 4-phosphate and phosphoenolpyruvate: step 7/7. In terms of biological role, catalyzes the anti-1,4-elimination of the C-3 phosphate and the C-6 proR hydrogen from 5-enolpyruvylshikimate-3-phosphate (EPSP) to yield chorismate, which is the branch point compound that serves as the starting substrate for the three terminal pathways of aromatic amino acid biosynthesis. This reaction introduces a second double bond into the aromatic ring system. The sequence is that of Chorismate synthase from Streptococcus agalactiae serotype Ia (strain ATCC 27591 / A909 / CDC SS700).